The following is a 419-amino-acid chain: Gamma-glutamyl phosphate reductase (419 aa).

Belongs to the gamma-glutamyl phosphate reductase family.

It localises to the cytoplasm. It catalyses the reaction L-glutamate 5-semialdehyde + phosphate + NADP(+) = L-glutamyl 5-phosphate + NADPH + H(+). The protein operates within amino-acid biosynthesis; L-proline biosynthesis; L-glutamate 5-semialdehyde from L-glutamate: step 2/2. In terms of biological role, catalyzes the NADPH-dependent reduction of L-glutamate 5-phosphate into L-glutamate 5-semialdehyde and phosphate. The product spontaneously undergoes cyclization to form 1-pyrroline-5-carboxylate. The sequence is that of Gamma-glutamyl phosphate reductase from Maridesulfovibrio salexigens (strain ATCC 14822 / DSM 2638 / NCIMB 8403 / VKM B-1763) (Desulfovibrio salexigens).